The sequence spans 87 residues: Large ribosomal subunit protein bL27 (87 aa).

Residues 1-22 (MAHKKAGGSSRNGRDSQGQRRG) are disordered.

It belongs to the bacterial ribosomal protein bL27 family.

This Nitratidesulfovibrio vulgaris (strain DP4) (Desulfovibrio vulgaris) protein is Large ribosomal subunit protein bL27.